The sequence spans 1866 residues: Nucleoporin Nup188 (1866 aa).

The protein belongs to the Nup188 family. As to quaternary structure, part of the nuclear pore complex (NPC).

The protein resides in the nucleus. Its subcellular location is the nuclear pore complex. In terms of biological role, component of the nuclear pore complex (NPC), a complex required for the trafficking across the nuclear envelope. Required for proper protein transport into the nucleus. This is Nucleoporin Nup188 from Drosophila melanogaster (Fruit fly).